The chain runs to 224 residues: Perchlorate reductase assembly chaperone protein (224 aa).

It belongs to the type II DMSO reductase enzyme chaperone family.

The protein resides in the cytoplasm. In terms of biological role, may function as a system-specific molybdenum chaperone protein essential for the assembly of the perchlorate reductase PcrAB complex prior to its periplasmic translocation via the Tat pathway. The protein is Perchlorate reductase assembly chaperone protein (pcrD) of Dechloromonas aromatica (strain RCB).